We begin with the raw amino-acid sequence, 416 residues long: Probable protein phosphatase 2C 49 (416 aa).

Positions 91-411 (RYGVTSVFGR…DNVSVVVVDL (321 aa)) constitute a PPM-type phosphatase domain. Residues Asp-131, Gly-132, and Asp-319 each contribute to the Mn(2+) site. Over residues 343–360 (PPSPPGCSRPKAVLPPPA) the composition is skewed to pro residues. Positions 343–368 (PPSPPGCSRPKAVLPPPAGASGGGGG) are disordered. Asp-402 is a binding site for Mn(2+).

Belongs to the PP2C family. Requires Mg(2+) as cofactor. Mn(2+) is required as a cofactor.

The catalysed reaction is O-phospho-L-seryl-[protein] + H2O = L-seryl-[protein] + phosphate. It catalyses the reaction O-phospho-L-threonyl-[protein] + H2O = L-threonyl-[protein] + phosphate. This chain is Probable protein phosphatase 2C 49, found in Oryza sativa subsp. japonica (Rice).